Consider the following 290-residue polypeptide: Lipoyl synthase (290 aa).

7 residues coordinate [4Fe-4S] cluster: Cys44, Cys49, Cys55, Cys70, Cys74, Cys77, and Ser282. A Radical SAM core domain is found at 56 to 271; sequence WGEGTATFMI…ELLGKEMGFR (216 aa).

It belongs to the radical SAM superfamily. Lipoyl synthase family. It depends on [4Fe-4S] cluster as a cofactor.

It is found in the cytoplasm. The enzyme catalyses [[Fe-S] cluster scaffold protein carrying a second [4Fe-4S](2+) cluster] + N(6)-octanoyl-L-lysyl-[protein] + 2 oxidized [2Fe-2S]-[ferredoxin] + 2 S-adenosyl-L-methionine + 4 H(+) = [[Fe-S] cluster scaffold protein] + N(6)-[(R)-dihydrolipoyl]-L-lysyl-[protein] + 4 Fe(3+) + 2 hydrogen sulfide + 2 5'-deoxyadenosine + 2 L-methionine + 2 reduced [2Fe-2S]-[ferredoxin]. It functions in the pathway protein modification; protein lipoylation via endogenous pathway; protein N(6)-(lipoyl)lysine from octanoyl-[acyl-carrier-protein]: step 2/2. In terms of biological role, catalyzes the radical-mediated insertion of two sulfur atoms into the C-6 and C-8 positions of the octanoyl moiety bound to the lipoyl domains of lipoate-dependent enzymes, thereby converting the octanoylated domains into lipoylated derivatives. The polypeptide is Lipoyl synthase (Flavobacterium psychrophilum (strain ATCC 49511 / DSM 21280 / CIP 103535 / JIP02/86)).